Consider the following 393-residue polypeptide: uncharacterized protein (393 aa).

Positions 164 to 183 (ASDPHPGKNSPASPTGENKE) are disordered. Residues 173 to 183 (SPASPTGENKE) are compositionally biased toward polar residues.

This is an uncharacterized protein from Treponema pallidum (strain Nichols).